We begin with the raw amino-acid sequence, 397 residues long: LIM/homeobox protein Lhx9 (397 aa).

LIM zinc-binding domains are found at residues A69–V130 and Q131–G193. Disordered regions lie at residues E248–T272 and E330–D364. A DNA-binding region (homeobox) is located at residues T267 to L326.

As to quaternary structure, interacts with LDB1 and LDB2.

It localises to the nucleus. In terms of biological role, involved in gonadal development. This Bos taurus (Bovine) protein is LIM/homeobox protein Lhx9 (LHX9).